The sequence spans 497 residues: Lysine--tRNA ligase (497 aa).

Mg(2+) is bound by residues Glu-409 and Glu-416.

This sequence belongs to the class-II aminoacyl-tRNA synthetase family. As to quaternary structure, homodimer. Mg(2+) serves as cofactor.

The protein localises to the cytoplasm. It catalyses the reaction tRNA(Lys) + L-lysine + ATP = L-lysyl-tRNA(Lys) + AMP + diphosphate. In Streptococcus pyogenes serotype M3 (strain ATCC BAA-595 / MGAS315), this protein is Lysine--tRNA ligase.